The chain runs to 343 residues: DNA repair and recombination protein RadA (343 aa).

107–114 (GEFGAGKS) is an ATP binding site.

It belongs to the eukaryotic RecA-like protein family.

In terms of biological role, involved in DNA repair and in homologous recombination. Binds and assemble on single-stranded DNA to form a nucleoprotein filament. Hydrolyzes ATP in a ssDNA-dependent manner and promotes DNA strand exchange between homologous DNA molecules. The protein is DNA repair and recombination protein RadA of Haloquadratum walsbyi (strain DSM 16790 / HBSQ001).